Reading from the N-terminus, the 421-residue chain is Nacrein-like protein M (421 aa).

N27 carries N-linked (GlcNAc...) asparagine glycosylation. One can recognise an Alpha-carbonic anhydrase domain in the interval 33-420 (AGFSYDRSIC…KNKVTVYKSF (388 aa)). The Zn(2+) site is built by H132, H134, and H157. Over residues 197–206 (DGFGDEPDDE) the composition is skewed to acidic residues. Residues 197-303 (DGFGDEPDDE…GENGHKHGCR (107 aa)) are disordered. The span at 207–219 (ECKRILKGHHPDN) shows a compositional bias: basic and acidic residues. Positions 220–295 (NENGNGDNGN…NNGDNGNNGE (76 aa)) are enriched in low complexity. 24 tandem repeats follow at residues 225-227 (GDN), 228-230 (GNN), 231-233 (GYN), 234-236 (GDN), 237-239 (GNN), 240-242 (GDN), 243-245 (GNN), 246-248 (GYN), 249-251 (GDN), 252-254 (GNN), 255-257 (GDN), 258-260 (GNN), 261-263 (GYN), 264-266 (GDN), 267-269 (GNN), 270-272 (GDN), 273-275 (GNN), 276-278 (GEN), 279-281 (GNN), 282-284 (GEN), 285-287 (GNN), 288-290 (GDN), 291-292 (GN), and 294-296 (GEN). The segment at 225–296 (GDNGNNGYNG…NGDNGNNGEN (72 aa)) is 24 X 3 AA approximate tandem repeats of G-X-N. Substrate is bound at residue 361–362 (TT).

It belongs to the alpha-carbonic anhydrase family. As to quaternary structure, homooligomer; disulfide-linked. May also be disulfide-linked to insoluble organic matrix. Requires Zn(2+) as cofactor. Expressed in the mantle.

It localises to the secreted. The protein resides in the extracellular space. It is found in the extracellular matrix. It carries out the reaction hydrogencarbonate + H(+) = CO2 + H2O. Functionally, acts as a negative regulator for calcification in the shells of mollusks. May function both as a calcium concentrator and as a carbonic anhydrase required for production of carbonate ions, which are assembled to CaCO(3) at mineralization sites. Is important for shell formation in both the calcitic prismatic layer and the aragonitic nacreous layerr. Shows inhibitory activity of crystal formation when present in free state but, when attached to the insoluble matrix, may regulate the form and size of aragonite crystal. The sequence is that of Nacrein-like protein M from Pinctada maxima (Silver-lipped pearl oyster).